Consider the following 427-residue polypeptide: DNA topoisomerase 6 subunit A (427 aa).

The region spanning 76–209 (LSLSSVQTEI…LNVIAAEKGV (134 aa)) is the Topo IIA-type catalytic domain. The active-site O-(5'-phospho-DNA)-tyrosine intermediate is Tyr-170. Mg(2+) contacts are provided by Glu-256 and Asp-308.

The protein belongs to the TOP6A family. In terms of assembly, homodimer. Heterotetramer of two TOP6A and two TOP6B subunits. Interacts with BIN4 and RHL1. Mg(2+) serves as cofactor. As to expression, highly expressed in leaves, stems, flowers and seedlings.

The protein resides in the nucleus. It catalyses the reaction ATP-dependent breakage, passage and rejoining of double-stranded DNA.. Its function is as follows. Component of the DNA topoisomerase VI involved in chromatin organization and progression of endoreduplication cycles. Relaxes both positive and negative superturns and exhibits a strong decatenase activity. Involved in cell-elongation processes. This chain is DNA topoisomerase 6 subunit A, found in Arabidopsis thaliana (Mouse-ear cress).